An 809-amino-acid chain; its full sequence is Lon protease (809 aa).

Residues 42–242 form the Lon N-terminal domain; sequence LVIYPLGGRP…KVLTLLKKEL (201 aa). 395-402 is a binding site for ATP; that stretch reads GPPGVGKT. In terms of domain architecture, Lon proteolytic spans 629–809; it reads LTGVGIVTGL…YAEVAKLVFG (181 aa). Catalysis depends on residues serine 716 and lysine 759.

It belongs to the peptidase S16 family. Homohexamer. Organized in a ring with a central cavity.

The protein localises to the cytoplasm. The enzyme catalyses Hydrolysis of proteins in presence of ATP.. ATP-dependent serine protease that mediates the selective degradation of mutant and abnormal proteins as well as certain short-lived regulatory proteins. Required for cellular homeostasis and for survival from DNA damage and developmental changes induced by stress. Degrades polypeptides processively to yield small peptide fragments that are 5 to 10 amino acids long. Binds to DNA in a double-stranded, site-specific manner. This is Lon protease from Magnetococcus marinus (strain ATCC BAA-1437 / JCM 17883 / MC-1).